A 795-amino-acid polypeptide reads, in one-letter code: Protein translocase subunit SecA 2 (795 aa).

ATP-binding positions include Q84, 102 to 106 (GEGKT), and D496.

This sequence belongs to the SecA family. In terms of assembly, monomer and homodimer. Part of the essential Sec protein translocation apparatus which comprises SecA, SecYEG and auxiliary proteins SecDF. Other proteins may also be involved.

It is found in the cell membrane. The protein resides in the cytoplasm. It catalyses the reaction ATP + H2O + cellular proteinSide 1 = ADP + phosphate + cellular proteinSide 2.. Part of the Sec protein translocase complex. Interacts with the SecYEG preprotein conducting channel. Has a central role in coupling the hydrolysis of ATP to the transfer of proteins into and across the cell membrane, serving as an ATP-driven molecular motor driving the stepwise translocation of polypeptide chains across the membrane. The sequence is that of Protein translocase subunit SecA 2 from Streptococcus agalactiae serotype III (strain NEM316).